The sequence spans 3680 residues: Dystrophin (3680 aa).

Residues 1 to 237 (MLWWEEVEDC…ILMYITSLFQ (237 aa)) form an actin-binding region. Calponin-homology (CH) domains are found at residues 15-119 (DVQK…LHWQ) and 134-240 (TNSE…QVLP). The tract at residues 63–72 (PKEKGSTRVH) is ANK2- and ANK-3 binding. Over residues 310-323 (TSDPTRSPLPSQHL) the composition is skewed to polar residues. A disordered region spans residues 310–332 (TSDPTRSPLPSQHLETPEDKSFG). 24 Spectrin repeats span residues 340-448 (ANLD…NLHK), 449-557 (VLMD…LLQD), 560-668 (LKWQ…QISQ), 720-829 (EIRK…WLEY), 831-935 (NNII…ELQT), 944-1047 (RYQE…KLEE), 1050-1156 (AKLR…ALKG), 1159-1265 (DKTV…TLEE), 1268-1369 (ACWH…LLEQ), 1370-1465 (SIQS…LFQK), 1470-1570 (EQRL…QLEK), 1573-1678 (KLSR…LLLE), 1681-1780 (KHME…KASI), 1781-1876 (PLKE…KALE), 1879-1981 (HQWY…TVHE), 1994-2103 (EISY…RFDR), 2106-2210 (EKWR…RLEE), 2213-2320 (NILS…EIEA), 2321-2418 (HVKD…LRAK), 2470-2572 (FNRA…QLTE), 2575-2681 (KDST…ALEE), 2684-2797 (RLLQ…HLEA), 2803-2925 (KRLH…RKID), and 2930-3035 (RLQE…QLHE). An interaction with SYNM region spans residues 1418–1915 (DLTSHEISLE…PEPRDERKIK (498 aa)). Residues 3050–3083 (TSVQGPWERAISPNKVPYYINHETQTTCWDHPKM) form the WW domain. The tract at residues 3053–3403 (QGPWERAISP…TVLEGDNMET (351 aa)) is interaction with SYNM. The segment at 3303 to 3359 (KHQAKCNICKECPIIGFRYRSLKHFNYDICQSCFFSGRVAKGHKMHYPMVEYCTPTT) adopts a ZZ-type; degenerate zinc-finger fold. Zn(2+)-binding residues include Cys3308, Cys3311, Cys3332, and Cys3335. Residues 3461-3513 (DDEHLLIQHYWRSLNQESPLSQPRSPAQILISLESEERGELERILADLEGRNR) form a binds to SNTB1 region. Residues Ser3478, Ser3485, and Ser3495 each carry the phosphoserine modification. 2 disordered regions span residues 3524 to 3549 (QQHEHKGLSPLPSPPEMMPTSPQSPR) and 3595 to 3680 (PQAE…EDTM). Composition is skewed to polar residues over residues 3602–3621 (NGTTVSSPSTSLQRSDSSQP) and 3658–3668 (LNHSFPSSRGR). Residues Ser3607, Ser3608, Ser3612, Ser3618, Ser3619, and Ser3661 each carry the phosphoserine modification.

As to quaternary structure, interacts with SYNM. Interacts with the syntrophins SNTG1 and SNTG2. Interacts with KRT19. Component of the dystrophin-associated glycoprotein complex which is composed of three subcomplexes: a cytoplasmic complex comprised of DMD (or UTRN), DTNA and a number of syntrophins, such as SNTB1, SNTB2, SNTG1 and SNTG2, the transmembrane dystroglycan complex, and the sarcoglycan-sarcospan complex. Interacts with DAG1 (betaDAG1) with DMD; the interaction is inhibited by phosphorylation on the PPXY motif of DAG1. Interacts with SYNM; SNTA1 and SNTB1. Interacts with CMYA5. Directly interacts with ANK2 and ANK3; these interactions do not interfere with betaDAG1-binding and are necessary for proper localization in muscle cells. Identified in a dystroglycan complex that contains at least PRX, DRP2, UTRN, DMD and DAG1. Interacts with DTNB. Interacts with PGM5; the interaction is direct. Interacts with NOS1; localizes NOS1 to sarcolemma in muscle cells.

The protein localises to the cell membrane. The protein resides in the sarcolemma. It is found in the cytoplasm. Its subcellular location is the cytoskeleton. It localises to the postsynaptic cell membrane. Its function is as follows. Anchors the extracellular matrix to the cytoskeleton via F-actin. Ligand for dystroglycan. Component of the dystrophin-associated glycoprotein complex which accumulates at the neuromuscular junction (NMJ) and at a variety of synapses in the peripheral and central nervous systems and has a structural function in stabilizing the sarcolemma. Also implicated in signaling events and synaptic transmission. The polypeptide is Dystrophin (DMD) (Canis lupus familiaris (Dog)).